Here is a 299-residue protein sequence, read N- to C-terminus: Tyrosine recombinase XerC (299 aa).

A Core-binding (CB) domain is found at 1–85 (MERQLEAYCA…AVRGLYRYLN (85 aa)). Positions 106–285 (RLPKTLDTDR…DFQHLAAVYD (180 aa)) constitute a Tyr recombinase domain. Catalysis depends on residues Arg146, Lys170, His237, Arg240, and His263. Tyr272 (O-(3'-phospho-DNA)-tyrosine intermediate) is an active-site residue.

The protein belongs to the 'phage' integrase family. XerC subfamily. Forms a cyclic heterotetrameric complex composed of two molecules of XerC and two molecules of XerD.

It localises to the cytoplasm. Functionally, site-specific tyrosine recombinase, which acts by catalyzing the cutting and rejoining of the recombining DNA molecules. The XerC-XerD complex is essential to convert dimers of the bacterial chromosome into monomers to permit their segregation at cell division. It also contributes to the segregational stability of plasmids. This Pseudomonas entomophila (strain L48) protein is Tyrosine recombinase XerC.